A 518-amino-acid chain; its full sequence is Cytochrome P450 monooxygenase pyr3 (518 aa).

Residues 26 to 46 (GVAIVLFLAPLALHLVSSYLF) form a helical membrane-spanning segment. C458 contributes to the heme binding site.

Belongs to the cytochrome P450 family. The cofactor is heme.

The protein resides in the membrane. It participates in secondary metabolite biosynthesis; terpenoid biosynthesis. Its function is as follows. Cytochrome P450 monooxygenase; part of the gene cluster that mediates the biosynthesis of pyripyropene A, a specific human acyl-coenzyme A:cholesterol acyltransferase 2 inhibitor. The first step of the pathway is the synthesis of nicotinyl-CoA from nicotinic acid by the nicotinic acid-CoA ligase pyr1. Nicotinyl-CoA is then a substrate of polyketide synthase pyr2 to produce 4-hydroxy-6-(3-pyridinyl)-2H-pyran-2-one (HPPO) which is further prenylated by the polyprenyl transferase pyr6 to yield farnesyl-HPPO. The next steps consist of an epoxidation of farnesyl-HPPO to epoxyfarnesyl-HPPO by FAD-dependent monooxygenase pyr5 and a cyclization of the terpenoid portion by the terpene cyclase pyr4 to yield deacetyl-pyripyropene E. The 2 cytochrome P450 monooxygenases pyr3 and pyr9, and the 2 acetyltransferases pyr7 and pyr8 are involved in the conversion of deacetyl-pyripyropene E into pyripyropene A through several cycles of oxidation and acetylation steps. Pyr7 acetylates deacetyl-pyripyropene E to pyripyropene E which is oxidized to 11-deacetyl-pyripyropene O by pyr3, which is in turn acetylated into pyripyropene O by pyr8. Pyripyropene O is then oxidized to deacetyl-pyripyropene A by pyr9. Deacetyl-pyripyropene A is finally acetylated to pyripyropene A by pyr8. This chain is Cytochrome P450 monooxygenase pyr3, found in Aspergillus fumigatus (strain ATCC MYA-4609 / CBS 101355 / FGSC A1100 / Af293) (Neosartorya fumigata).